Consider the following 375-residue polypeptide: 23S rRNA (uracil(747)-C(5))-methyltransferase RlmC (375 aa).

[4Fe-4S] cluster-binding residues include Cys-3, Cys-11, Cys-14, and Cys-87. 4 residues coordinate S-adenosyl-L-methionine: Gln-212, Phe-241, Glu-262, and Asn-307. Cys-334 serves as the catalytic Nucleophile.

It belongs to the class I-like SAM-binding methyltransferase superfamily. RNA M5U methyltransferase family. RlmC subfamily.

It catalyses the reaction uridine(747) in 23S rRNA + S-adenosyl-L-methionine = 5-methyluridine(747) in 23S rRNA + S-adenosyl-L-homocysteine + H(+). Its function is as follows. Catalyzes the formation of 5-methyl-uridine at position 747 (m5U747) in 23S rRNA. In Escherichia coli O157:H7, this protein is 23S rRNA (uracil(747)-C(5))-methyltransferase RlmC.